We begin with the raw amino-acid sequence, 656 residues long: Protein teflon (656 aa).

The C2H2-type 1 zinc finger occupies 33-56 (LYCHFCRDLFTQLPEFLRHLQSNH). A disordered region spans residues 80–131 (DKAHEDAQSAGHNSSSGDSRSLMNSEDSRAIDGSEENSDNSPVKPEQIGKQN). Polar residues predominate over residues 89-104 (AGHNSSSGDSRSLMNS). 2 C2H2-type zinc fingers span residues 606–628 (YFCK…LISH) and 632–655 (FQCT…RNAH).

The protein belongs to the Teflon family.

It localises to the nucleus. The protein localises to the chromosome. In terms of biological role, specifically required in males for proper segregation of autosomal bivalents at meiosis I. Expression is required in the male germ line prior to spermatocyte stage S4. May have a role as a bridging molecule maintaining adhesion to hold autosome bivalents together via heterochromatic connections. The chain is Protein teflon from Drosophila sechellia (Fruit fly).